A 220-amino-acid chain; its full sequence is ATP-dependent Clp protease proteolytic subunit (220 aa).

Catalysis depends on Ser-122, which acts as the Nucleophile. His-147 is a catalytic residue.

Belongs to the peptidase S14 family. Fourteen ClpP subunits assemble into 2 heptameric rings which stack back to back to give a disk-like structure with a central cavity, resembling the structure of eukaryotic proteasomes.

It is found in the cytoplasm. The enzyme catalyses Hydrolysis of proteins to small peptides in the presence of ATP and magnesium. alpha-casein is the usual test substrate. In the absence of ATP, only oligopeptides shorter than five residues are hydrolyzed (such as succinyl-Leu-Tyr-|-NHMec, and Leu-Tyr-Leu-|-Tyr-Trp, in which cleavage of the -Tyr-|-Leu- and -Tyr-|-Trp bonds also occurs).. Functionally, cleaves peptides in various proteins in a process that requires ATP hydrolysis. Has a chymotrypsin-like activity. Plays a major role in the degradation of misfolded proteins. This chain is ATP-dependent Clp protease proteolytic subunit, found in Colwellia psychrerythraea (strain 34H / ATCC BAA-681) (Vibrio psychroerythus).